The primary structure comprises 385 residues: Protein pelota homolog (385 aa).

Belongs to the eukaryotic release factor 1 family. Pelota subfamily. As to quaternary structure, component of the Pelota-HBS1L complex, also named Dom34-Hbs1 complex, composed of PELO and HBS1L. Requires a divalent metal cation as cofactor.

It localises to the cytoplasm. Its function is as follows. Component of the Pelota-HBS1L complex, a complex that recognizes stalled ribosomes and triggers the No-Go Decay (NGD) pathway. In the Pelota-HBS1L complex, PELO recognizes ribosomes stalled at the 3' end of an mRNA and engages stalled ribosomes by destabilizing mRNA in the mRNA channel. Following mRNA extraction from stalled ribosomes by the SKI complex, the Pelota-HBS1L complex promotes recruitment of ABCE1, which drives the disassembly of stalled ribosomes, followed by degradation of damaged mRNAs as part of the NGD pathway. This is Protein pelota homolog (pelo) from Danio rerio (Zebrafish).